The primary structure comprises 320 residues: MPFITLERILAHTSFFLLFFVTFIYWGKFLYINIKPITILGEISMKIACFFITTFLLIRWSSSGHFPLSNLYESSMFLSWSFTLIHLILENKSKNTWLGIITAPSAMLTHGFATLSLPKEMQESVFLVPALQSHWLMMHVTMMMLSYSTLLCGSLLAITILIITLTKQKNLPILTSYFNFPFNSFIFKNLLQPMENEILSYKTQKVFSFINFRKWQLIKELDNWSYRVISLGFPLLTIGILSGAVWANEAWGSYWNWDPKETWALITWLIFAIYLHTRMIKGWQGKKPAIIASLGFFIVWICYLGVNLLGKGLHSYGWLI.

Transmembrane regions (helical) follow at residues 14–34, 37–57, 68–88, 97–117, 143–163, 228–248, 263–283, and 289–309; these read SFFLLFFVTFIYWGKFLYINI, ITILGEISMKIACFFITTFLL, LSNLYESSMFLSWSFTLIHLI, WLGIITAPSAMLTHGFATLSL, MMLSYSTLLCGSLLAITILII, VISLGFPLLTIGILSGAVWAN, WALITWLIFAIYLHTRMIKGW, and AIIASLGFFIVWICYLGVNLL.

It belongs to the CcmF/CycK/Ccl1/NrfE/CcsA family. In terms of assembly, may interact with Ccs1.

It is found in the plastid. The protein localises to the chloroplast thylakoid membrane. Required during biogenesis of c-type cytochromes (cytochrome c6 and cytochrome f) at the step of heme attachment. In Marchantia polymorpha (Common liverwort), this protein is Cytochrome c biogenesis protein CcsA.